The sequence spans 311 residues: Coelenterazine h 2-monooxygenase (311 aa).

The AB hydrolase-1 domain maps to 45–291; sequence NAVIFLHGNA…KGLHFSQEDA (247 aa). Asp162 and His285 together coordinate substrate.

As to quaternary structure, monomer.

It catalyses the reaction coelenterazine h + O2 = excited coelenteramide h monoanion + hnu + CO2 + H(+). In terms of biological role, upon binding the substrate, the enzyme catalyzes an oxygenation, producing a very short-lived hydroperoxide that cyclizes into a dioxetanone structure, which collapses, releasing a CO(2) molecule. The spontaneous breakdown of the dioxetanone releases the energy (about 50 kcal/mole) that is necessary to generate the excited state of the coelenteramide product, which is the singlet form of the monoanion. In vivo the product undergoes the process of nonradiative energy transfer to an accessory protein, a green fluorescent protein (GFP), which results in green bioluminescence. In vitro, in the absence of GFP, the product emits blue light. The protein is Coelenterazine h 2-monooxygenase of Renilla reniformis (Sea pansy).